We begin with the raw amino-acid sequence, 200 residues long: Phospholipase A2 inhibitor gamma subunit B (200 aa).

The first 19 residues, 1-19 (MKSFLFCCLLGTFLAIGMC), serve as a signal peptide directing secretion. 8 cysteine pairs are disulfide-bonded: Cys-22–Cys-46, Cys-25–Cys-32, Cys-39–Cys-67, Cys-73–Cys-94, Cys-95–Cys-100, Cys-120–Cys-145, Cys-138–Cys-165, and Cys-171–Cys-191. An N-linked (GlcNAc...) asparagine glycan is attached at Asn-33.

This sequence belongs to the CNF-like-inhibitor family. Heterodimer of subunit A and subunit B. As to expression, expressed by the liver.

Its subcellular location is the secreted. Inhibits the enzymatic activity of phospholipase A2 (PA2). This Gloydius brevicaudus siniticus (Chinese mamushi) protein is Phospholipase A2 inhibitor gamma subunit B.